We begin with the raw amino-acid sequence, 460 residues long: Argininosuccinate lyase (460 aa).

Belongs to the lyase 1 family. Argininosuccinate lyase subfamily.

It localises to the cytoplasm. The catalysed reaction is 2-(N(omega)-L-arginino)succinate = fumarate + L-arginine. It participates in amino-acid biosynthesis; L-arginine biosynthesis; L-arginine from L-ornithine and carbamoyl phosphate: step 3/3. This Alkaliphilus metalliredigens (strain QYMF) protein is Argininosuccinate lyase.